A 41-amino-acid polypeptide reads, in one-letter code: Large ribosomal subunit protein bL32c (41 aa).

The protein belongs to the bacterial ribosomal protein bL32 family.

It is found in the plastid. This chain is Large ribosomal subunit protein bL32c (rpl32), found in Helicosporidium sp. subsp. Simulium jonesii (Green alga).